The sequence spans 285 residues: Bifunctional protein FolD (285 aa).

NADP(+)-binding positions include 165-167 (GRS) and Ser-190.

It belongs to the tetrahydrofolate dehydrogenase/cyclohydrolase family. As to quaternary structure, homodimer.

It catalyses the reaction (6R)-5,10-methylene-5,6,7,8-tetrahydrofolate + NADP(+) = (6R)-5,10-methenyltetrahydrofolate + NADPH. The enzyme catalyses (6R)-5,10-methenyltetrahydrofolate + H2O = (6R)-10-formyltetrahydrofolate + H(+). It participates in one-carbon metabolism; tetrahydrofolate interconversion. Functionally, catalyzes the oxidation of 5,10-methylenetetrahydrofolate to 5,10-methenyltetrahydrofolate and then the hydrolysis of 5,10-methenyltetrahydrofolate to 10-formyltetrahydrofolate. The protein is Bifunctional protein FolD of Burkholderia orbicola (strain AU 1054).